A 464-amino-acid chain; its full sequence is Glycine--tRNA ligase (464 aa).

Positions 104 and 175 each coordinate substrate. ATP contacts are provided by residues 207–209 (RNE), 217–222 (FRTREF), 292–293 (EL), and 336–339 (GVNR). Substrate is bound at residue 222 to 226 (FEQME). 332–336 (EPALG) is a binding site for substrate.

The protein belongs to the class-II aminoacyl-tRNA synthetase family. Homodimer.

It is found in the cytoplasm. The enzyme catalyses tRNA(Gly) + glycine + ATP = glycyl-tRNA(Gly) + AMP + diphosphate. In terms of biological role, catalyzes the attachment of glycine to tRNA(Gly). The protein is Glycine--tRNA ligase of Leptospira interrogans serogroup Icterohaemorrhagiae serovar Lai (strain 56601).